The primary structure comprises 198 residues: Outer-membrane lipoprotein carrier protein (198 aa).

A signal peptide spans 1-17; the sequence is MKKFLFSLCLLSSTVLA.

The protein belongs to the LolA family. Monomer.

The protein resides in the periplasm. In terms of biological role, participates in the translocation of lipoproteins from the inner membrane to the outer membrane. Only forms a complex with a lipoprotein if the residue after the N-terminal Cys is not an aspartate (The Asp acts as a targeting signal to indicate that the lipoprotein should stay in the inner membrane). The protein is Outer-membrane lipoprotein carrier protein of Aliivibrio fischeri (strain ATCC 700601 / ES114) (Vibrio fischeri).